Consider the following 195-residue polypeptide: Capsid protein (195 aa).

Positions 148–195 (NAPILSTLPETTVVRRRGRSPRRRTPSPRRRRSQSPRRRRSASPASQC) are disordered. Positions 161 to 188 (VRRRGRSPRRRTPSPRRRRSQSPRRRRS) are enriched in basic residues. Residues Ser167, Ser174, and Ser182 each carry the phosphoserine; by host modification. The stretch at 167–172 (SPRRRT) is one 1; half-length repeat. The tract at residues 167 to 188 (SPRRRTPSPRRRRSQSPRRRRS) is 3 X 7 AA repeats of S-P-R-R-R-[PR]-S. The Bipartite nuclear localization signal motif lies at 170-187 (RRTPSPRRRRSQSPRRRR). 2 consecutive repeat copies span residues 174-180 (SPRRRRS) and 182-188 (SPRRRRS). Positions 189–195 (ASPASQC) are RNA binding.

This sequence belongs to the orthohepadnavirus core antigen family. In terms of assembly, homodimerizes, then multimerizes. Interacts with cytosol exposed regions of viral L glycoprotein present in the reticulum-to-Golgi compartment. Interacts with human FLNB. Phosphorylated form interacts with host importin alpha; this interaction depends on the exposure of the NLS, which itself depends upon genome maturation and/or phosphorylation of the capsid protein. Interacts with host NUP153. Phosphorylated by host SRPK1, SRPK2, and maybe protein kinase C or GAPDH. Phosphorylation is critical for pregenomic RNA packaging. Protein kinase C phosphorylation is stimulated by HBx protein and may play a role in transport of the viral genome to the nucleus at the late step during the viral replication cycle.

It is found in the virion. It localises to the host cytoplasm. Its function is as follows. Self assembles to form an icosahedral capsid. Most capsids appear to be large particles with an icosahedral symmetry of T=4 and consist of 240 copies of capsid protein, though a fraction forms smaller T=3 particles consisting of 180 capsid proteins. Entering capsids are transported along microtubules to the nucleus. Phosphorylation of the capsid is thought to induce exposure of nuclear localization signal in the C-terminal portion of the capsid protein that allows binding to the nuclear pore complex via the importin (karyopherin-) alpha and beta. Capsids are imported in intact form through the nuclear pore into the nuclear basket, where it probably binds NUP153. Only capsids that contain the mature viral genome can release the viral DNA and capsid protein into the nucleoplasm. Immature capsids get stuck in the basket. Capsids encapsulate the pre-genomic RNA and the P protein. Pre-genomic RNA is reverse-transcribed into DNA while the capsid is still in the cytoplasm. The capsid can then either be directed to the nucleus, providing more genomes for transcription, or bud through the endoplasmic reticulum to provide new virions. In Hepatitis B virus genotype G (isolate United States/USG17/2002) (HBV-G), this protein is Capsid protein.